Here is a 240-residue protein sequence, read N- to C-terminus: 1-(5-phosphoribosyl)-5-[(5-phosphoribosylamino)methylideneamino] imidazole-4-carboxamide isomerase (240 aa).

Asp10 serves as the catalytic Proton acceptor. The active-site Proton donor is the Asp132.

The protein belongs to the HisA/HisF family.

It localises to the cytoplasm. It carries out the reaction 1-(5-phospho-beta-D-ribosyl)-5-[(5-phospho-beta-D-ribosylamino)methylideneamino]imidazole-4-carboxamide = 5-[(5-phospho-1-deoxy-D-ribulos-1-ylimino)methylamino]-1-(5-phospho-beta-D-ribosyl)imidazole-4-carboxamide. It participates in amino-acid biosynthesis; L-histidine biosynthesis; L-histidine from 5-phospho-alpha-D-ribose 1-diphosphate: step 4/9. This Methanocella arvoryzae (strain DSM 22066 / NBRC 105507 / MRE50) protein is 1-(5-phosphoribosyl)-5-[(5-phosphoribosylamino)methylideneamino] imidazole-4-carboxamide isomerase.